We begin with the raw amino-acid sequence, 193 residues long: MLENLKKYKIVLASNSPRRRNLLSGLDIDFEVRVISDIDESYPDSIDSMEIPLYIARSKAEAYKPTMADDELLITADTIVWTFDGVMGKPANREEAYAMLHALSDHVHQVITGVCIMTKDKNVGFSVESAVCFAKLGDEEINYYLDKYKPYDKAGGYGIQEWIGYIGVEAINGSFYNVMGLPVQKLYQELKHF.

Aspartate 77 functions as the Proton acceptor in the catalytic mechanism.

It belongs to the Maf family. YhdE subfamily. Requires a divalent metal cation as cofactor.

Its subcellular location is the cytoplasm. It carries out the reaction dTTP + H2O = dTMP + diphosphate + H(+). It catalyses the reaction UTP + H2O = UMP + diphosphate + H(+). Functionally, nucleoside triphosphate pyrophosphatase that hydrolyzes dTTP and UTP. May have a dual role in cell division arrest and in preventing the incorporation of modified nucleotides into cellular nucleic acids. This Parabacteroides distasonis (strain ATCC 8503 / DSM 20701 / CIP 104284 / JCM 5825 / NCTC 11152) protein is dTTP/UTP pyrophosphatase.